A 174-amino-acid polypeptide reads, in one-letter code: B3 domain-containing protein At3g06220 (174 aa).

A DNA-binding region (TF-B3) is located at residues 8–101; the sequence is PRFYTVFLSC…SYEVSIYGRG (94 aa). The disordered stretch occupies residues 114–174; the sequence is EISDESESDN…ISDASDSDYY (61 aa). Acidic residues-rich tracts occupy residues 139–150 and 164–174; these read ENSDDTEGDNDS and EISDASDSDYY.

The protein localises to the nucleus. In Arabidopsis thaliana (Mouse-ear cress), this protein is B3 domain-containing protein At3g06220.